Consider the following 655-residue polypeptide: Sphingomyelin phosphodiesterase 3 (655 aa).

Residues 1-10 (MVLYTTPFPN) lie on the Cytoplasmic side of the membrane. An intramembrane region (helical) is located at residues 11 to 31 (SCLSALHAVSWALIFPCYWLV). At 32–64 (DRLVASFIPTTYEKRQRADDPCYLQLFCTVLFT) the chain is on the cytoplasmic side. Residues Cys-53 and Cys-59 are each lipidated (S-palmitoyl cysteine). Positions 65–85 (PVYLALLVAALPFAFLGFIFW) form an intramembrane region, helical. Over 86–655 (SPLQSARRPY…LMVSAGEEEA (570 aa)) the chain is Cytoplasmic. Ser-178 is modified (phosphoserine). Disordered stretches follow at residues 209–237 (VEYK…DGSL) and 250–320 (GGRA…SNSK). The span at 211-221 (YKGDGGRHPSD) shows a compositional bias: basic and acidic residues. The residue at position 289 (Ser-289) is a Phosphoserine. Glu-362 is a binding site for Mg(2+). S-palmitoyl cysteine attachment occurs at residues Cys-395 and Cys-396. His-639 (proton acceptor) is an active-site residue.

Belongs to the neutral sphingomyelinase family. Mg(2+) is required as a cofactor. Post-translationally, palmitoylated, palmitoylation-deficient proteins are targeted for lysosomal degradation. As to expression, in brain sections, it is restricted to neurons and especially prominent in large cells, including Purkinje cells, pyramidal cells, neurons of the dentate gyrus granular layer, and neurons in the pontine nuclei. Also present in the hypothalamic nuclei, neurons in the piriform cortex, and nuclei of the brainstem (at protein level). Mainly expressed in brain and jejunum. Weakly or not expressed in heart, spleen, lung, liver, kidney and testis.

The protein localises to the golgi apparatus membrane. It is found in the cell membrane. The catalysed reaction is a sphingomyelin + H2O = phosphocholine + an N-acylsphing-4-enine + H(+). It catalyses the reaction N-(15Z-tetracosenoyl)sphing-4-enine-1-phosphocholine + H2O = N-(15Z-tetracosenoyl)-sphing-4-enine + phosphocholine + H(+). It carries out the reaction N-(tetracosanoyl)-sphing-4-enine-1-phosphocholine + H2O = N-tetracosanoyl-sphing-4-enine + phosphocholine + H(+). The enzyme catalyses an N-(acyl)-sphingosylphosphocholine + H2O = an N-acyl-sphingoid base + phosphocholine + H(+). The catalysed reaction is 1-hexadecanoyl-sn-glycero-3-phosphocholine + H2O = 1-hexadecanoyl-sn-glycerol + phosphocholine + H(+). It catalyses the reaction 1-O-octadecyl-sn-glycero-3-phosphocholine + H2O = 1-O-octadecyl-sn-glycerol + phosphocholine + H(+). It carries out the reaction a sphingosylphosphocholine + H2O = a sphingoid base + phosphocholine + H(+). The enzyme catalyses N-(hexadecanoyl)-sphing-4-enine-1-phosphocholine + H2O = N-hexadecanoylsphing-4-enine + phosphocholine + H(+). It functions in the pathway lipid metabolism; sphingolipid metabolism. Its activity is regulated as follows. Inhibited by nSMase inhibitor GW4869. Binding of anionic phospholipids (APLs) such as phosphatidylserine (PS) and phosphatidic acid (PA) increases enzymatic activity. Functionally, catalyzes the hydrolysis of sphingomyelin to form ceramide and phosphocholine. Ceramide mediates numerous cellular functions, such as apoptosis and growth arrest, and is capable of regulating these 2 cellular events independently. Also hydrolyzes sphingosylphosphocholine. Binds to anionic phospholipids (APLs) such as phosphatidylserine (PS) and phosphatidic acid (PA) that modulate enzymatic activity and subcellular location. Regulates the cell cycle by acting as a growth suppressor in confluent cells. Acts as a regulator of postnatal development and participates in bone and dentin mineralization. May be involved in IL-1-beta-induced JNK activation in hepatocytes. May act as a mediator in transcriptional regulation of NOS2/iNOS via the NF-kappa-B activation under inflammatory conditions. This chain is Sphingomyelin phosphodiesterase 3, found in Rattus norvegicus (Rat).